A 343-amino-acid chain; its full sequence is Cytoplasmic tRNA 2-thiolation protein 1 (343 aa).

This sequence belongs to the TtcA family. CTU1/NCS6/ATPBD3 subfamily.

It localises to the cytoplasm. It functions in the pathway tRNA modification; 5-methoxycarbonylmethyl-2-thiouridine-tRNA biosynthesis. Its function is as follows. Plays a central role in 2-thiolation of mcm(5)S(2)U at tRNA wobble positions of tRNA(Lys), tRNA(Glu) and tRNA(Gln). Directly binds tRNAs and probably acts by catalyzing adenylation of tRNAs, an intermediate required for 2-thiolation. It is unclear whether it acts as a sulfurtransferase that transfers sulfur from thiocarboxylated URM1 onto the uridine of tRNAs at wobble position. The chain is Cytoplasmic tRNA 2-thiolation protein 1 from Drosophila grimshawi (Hawaiian fruit fly).